Reading from the N-terminus, the 206-residue chain is Glutathione S-transferase class-mu 28 kDa isozyme (206 aa).

The region spanning 1 to 81 (VKLIYFNGRG…FIARKHNMMG (81 aa)) is the GST N-terminal domain. Glutathione-binding positions include Tyr5, 5 to 6 (YF), Arg11, 36 to 40 (WPKIK), Leu48, 50 to 51 (IV), and 65 to 66 (ES). The GST C-terminal domain maps to 83–206 (TDDEYYIIEK…YLSERHATAF (124 aa)).

This sequence belongs to the GST superfamily. Mu family. In terms of assembly, homodimer.

It catalyses the reaction RX + glutathione = an S-substituted glutathione + a halide anion + H(+). In terms of biological role, conjugation of reduced glutathione to a wide number of exogenous and endogenous hydrophobic electrophiles. Its function is as follows. GST isoenzymes appear to play a central role in the parasite detoxification system. Other functions are also suspected including a role in increasing the solubility of haematin in the parasite gut. This Schistosoma japonicum (Blood fluke) protein is Glutathione S-transferase class-mu 28 kDa isozyme.